Consider the following 376-residue polypeptide: Chaperone protein DnaJ (376 aa).

In terms of domain architecture, J spans 5 to 72; the sequence is DFYEVLGVPK…QKRAAYDQYG (68 aa). The segment at 136–214 adopts a CR-type zinc-finger fold; the sequence is GKEAQIRIPS…CHGQGRVKKQ (79 aa). Zn(2+)-binding residues include cysteine 149, cysteine 152, cysteine 166, cysteine 169, cysteine 188, cysteine 191, cysteine 202, and cysteine 205. CXXCXGXG motif repeat units follow at residues 149–156, 166–173, 188–195, and 202–209; these read CETCHGSG, CGTCQGSG, CPHCRGTG, and CTACHGQG. Disordered regions lie at residues 227-246 and 352-376; these read DGMR…GGPP and SLKK…SFFS. Gly residues predominate over residues 237–246; it reads GEPGTNGGPP. Residues 367–376 are compositionally biased toward basic and acidic residues; the sequence is WTDRLKSFFS.

Belongs to the DnaJ family. In terms of assembly, homodimer. Requires Zn(2+) as cofactor.

It is found in the cytoplasm. Its function is as follows. Participates actively in the response to hyperosmotic and heat shock by preventing the aggregation of stress-denatured proteins and by disaggregating proteins, also in an autonomous, DnaK-independent fashion. Unfolded proteins bind initially to DnaJ; upon interaction with the DnaJ-bound protein, DnaK hydrolyzes its bound ATP, resulting in the formation of a stable complex. GrpE releases ADP from DnaK; ATP binding to DnaK triggers the release of the substrate protein, thus completing the reaction cycle. Several rounds of ATP-dependent interactions between DnaJ, DnaK and GrpE are required for fully efficient folding. Also involved, together with DnaK and GrpE, in the DNA replication of plasmids through activation of initiation proteins. In Acidovorax sp. (strain JS42), this protein is Chaperone protein DnaJ.